The chain runs to 1122 residues: Cytosolic carboxypeptidase 4 (1122 aa).

The interval 287-338 is disordered; sequence PGSTSSELPLNLTEEDFDDDGDEEMDKDSDVEAVKEDDDLETDLSKLSSKPG. The span at 299–313 shows a compositional bias: acidic residues; that stretch reads TEEDFDDDGDEEMDK. The 291-residue stretch at 731 to 1021 folds into the Peptidase M14 domain; that stretch reads YPYTYSTLMT…MYCLGLLILE (291 aa). His-803, Glu-806, and His-900 together coordinate Zn(2+). The active-site Proton donor/acceptor is the Glu-985. Residues 1099 to 1122 are disordered; it reads CALNKDEEEEEKEEGTGWRRRSVT.

The protein belongs to the peptidase M14 family. Interacts with MYLK. Interacts with TCF4. Zn(2+) is required as a cofactor. In terms of tissue distribution, widely expressed at low level. Expressed in eye, muscle, pituitary, testis and to a lower extent in brain.

It is found in the cytoplasm. The protein resides in the cytosol. It carries out the reaction (L-glutamyl)(n+1)-gamma-L-glutamyl-L-glutamyl-[protein] + H2O = (L-glutamyl)(n)-gamma-L-glutamyl-L-glutamyl-[protein] + L-glutamate. The enzyme catalyses C-terminal L-alpha-aminoacyl-L-glutamyl-L-glutamyl-[tubulin] + H2O = C-terminal L-alpha-aminoacyl-L-glutamyl-[tubulin] + L-glutamate. Metallocarboxypeptidase that mediates deglutamylation of tubulin and non-tubulin target proteins. Catalyzes the removal of polyglutamate side chains present on the gamma-carboxyl group of glutamate residues within the C-terminal tail of tubulin protein. Specifically cleaves tubulin long-side-chains, while it is not able to remove the branching point glutamate. Also catalyzes the removal of polyglutamate residues from the carboxy-terminus of non-tubulin proteins such as MYLK. This chain is Cytosolic carboxypeptidase 4, found in Mus musculus (Mouse).